A 328-amino-acid polypeptide reads, in one-letter code: RNA 3'-terminal phosphate cyclase (328 aa).

Residues Gln-100 and 276 to 280 each bind ATP; that span reads HLADQ. His-302 serves as the catalytic Tele-AMP-histidine intermediate.

It belongs to the RNA 3'-terminal cyclase family. Type 1 subfamily.

The protein resides in the cytoplasm. The enzyme catalyses a 3'-end 3'-phospho-ribonucleotide-RNA + ATP = a 3'-end 2',3'-cyclophospho-ribonucleotide-RNA + AMP + diphosphate. Its function is as follows. Catalyzes the conversion of 3'-phosphate to a 2',3'-cyclic phosphodiester at the end of RNA. The mechanism of action of the enzyme occurs in 3 steps: (A) adenylation of the enzyme by ATP; (B) transfer of adenylate to an RNA-N3'P to produce RNA-N3'PP5'A; (C) and attack of the adjacent 2'-hydroxyl on the 3'-phosphorus in the diester linkage to produce the cyclic end product. The biological role of this enzyme is unknown but it is likely to function in some aspects of cellular RNA processing. This Archaeoglobus fulgidus (strain ATCC 49558 / DSM 4304 / JCM 9628 / NBRC 100126 / VC-16) protein is RNA 3'-terminal phosphate cyclase (rtcA).